The primary structure comprises 710 residues: Interleukin-1 receptor-associated kinase 1 (710 aa).

The region spanning 27-106 (MCRFYKVMDA…DIITAWHPPA (80 aa)) is the Death domain. Position 66 is a phosphothreonine; by PKC/PRKCI (Thr-66). The segment at 107–133 (PVVPPSTAAPRPSSISAGSEAGDWSPR) is disordered. The tract at residues 110–211 (PPSTAAPRPS…FCEISQGTCN (102 aa)) is proST region. The span at 111–123 (PSTAAPRPSSISA) shows a compositional bias: low complexity. Ser-131 carries the phosphoserine modification. Residues Lys-134 and Lys-180 each participate in a glycyl lysine isopeptide (Lys-Gly) (interchain with G-Cter in ubiquitin) cross-link. Positions 169–190 (PPLPSSAPSSTKSSPESPVSGL) are disordered. The span at 174 to 188 (SAPSSTKSSPESPVS) shows a compositional bias: low complexity. Thr-209 is subject to Phosphothreonine; by IRAK4. In terms of domain architecture, Protein kinase spans 212-521 (FSEELRIGEG…TQVYKRLEGL (310 aa)). Residues 218–226 (IGEGGFGCV) and Lys-239 contribute to the ATP site. Asp-340 acts as the Proton acceptor in catalysis. ATP contacts are provided by residues 342-345 (KSSN) and Asp-358. Ser-375 is modified (phosphoserine). Position 387 is a phosphothreonine (Thr-387). 2 disordered regions span residues 527-655 (WELE…SEPP) and 689-710 (FPGL…EFQS). A compositionally biased stretch (polar residues) spans 537-553 (PSPQENSYMSTTGSAQS). Residue Ser-553 is modified to Phosphoserine. Residues 567-576 (APAQAAQQLQ) show a composition bias toward low complexity. Residues 616–639 (SCTQGGTTRESSVRSSPGFQPTTM) show a composition bias toward polar residues. The segment covering 640 to 654 (EGSPTGSSSLLSSEP) has biased composition (low complexity).

The protein belongs to the protein kinase superfamily. TKL Ser/Thr protein kinase family. Pelle subfamily. In terms of assembly, homodimer. Forms a complex with TRAF6, PELI1, IRAK4 and MYD88. Direct binding of SMAD6 to PELI1 prevents complex formation and hence negatively regulates IL1R-TLR signaling and eventually NF-kappa-B-mediated gene expression. The TRAF6-PELI1-IRAK4-MYD88 complex recruits MAP3K7/TAK1, TAB1 and TAB2 to mediate NF-kappa-B activation. Interaction with MYD88 recruits IRAK1 to the stimulated receptor complex. Interacts with TOLLIP; this interaction occurs in the cytosol prior to receptor activation. Interacts with IL1RL1. Interacts (when polyubiquitinated) with IKBKG/NEMO. Interacts with RSAD2/viperin. Interacts with IRAK1BP1. Interacts with PELI2. Interacts with ZC3H12A; this interaction increases the interaction between ZC3H12A and IKBKB/IKKB. Interacts with IRAK4. Interacts with PELI3. Interacts with PELI1 and TRAF6. Interacts with INAVA; the interaction takes place upon PRR stimulation. Interacts (via C-terminus) with NFATC4 (via N-terminus). Requires Mg(2+) as cofactor. Post-translationally, following recruitment on the activated receptor complex, phosphorylated on Thr-209, probably by IRAK4, resulting in a conformational change of the kinase domain, allowing further phosphorylations to take place. Thr-387 phosphorylation in the activation loop is required to achieve full enzymatic activity. In terms of processing, polyubiquitinated by TRAF6 after cell stimulation with IL-1-beta by PELI1, PELI2 and PELI3. Polyubiquitination occurs with polyubiquitin chains linked through 'Lys-63'. Ubiquitination promotes interaction with NEMO/IKBKG. Also sumoylated; leading to nuclear translocation. Highly expressed in liver, followed by kidney and skeletal muscle.

Its subcellular location is the cytoplasm. The protein resides in the nucleus. It is found in the lipid droplet. It carries out the reaction L-seryl-[protein] + ATP = O-phospho-L-seryl-[protein] + ADP + H(+). The enzyme catalyses L-threonyl-[protein] + ATP = O-phospho-L-threonyl-[protein] + ADP + H(+). Serine/threonine-protein kinase that plays a critical role in initiating innate immune response against foreign pathogens. Involved in Toll-like receptor (TLR) and IL-1R signaling pathways. Is rapidly recruited by MYD88 to the receptor-signaling complex upon TLR activation. Association with MYD88 leads to IRAK1 phosphorylation by IRAK4 and subsequent autophosphorylation and kinase activation. Phosphorylates E3 ubiquitin ligases Pellino proteins (PELI1, PELI2 and PELI3) to promote pellino-mediated polyubiquitination of IRAK1. Then, the ubiquitin-binding domain of IKBKG/NEMO binds to polyubiquitinated IRAK1 bringing together the IRAK1-MAP3K7/TAK1-TRAF6 complex and the NEMO-IKKA-IKKB complex. In turn, MAP3K7/TAK1 activates IKKs (CHUK/IKKA and IKBKB/IKKB) leading to NF-kappa-B nuclear translocation and activation. Alternatively, phosphorylates TIRAP to promote its ubiquitination and subsequent degradation. Phosphorylates the interferon regulatory factor 7 (IRF7) to induce its activation and translocation to the nucleus, resulting in transcriptional activation of type I IFN genes, which drive the cell in an antiviral state. When sumoylated, translocates to the nucleus and phosphorylates STAT3. The protein is Interleukin-1 receptor-associated kinase 1 (Irak1) of Mus musculus (Mouse).